We begin with the raw amino-acid sequence, 363 residues long: uncharacterized protein (363 aa).

29 to 36 serves as a coordination point for ATP; the sequence is GSINSGKT.

It belongs to the archaeal ATPase family.

This is an uncharacterized protein from Methanocaldococcus jannaschii (strain ATCC 43067 / DSM 2661 / JAL-1 / JCM 10045 / NBRC 100440) (Methanococcus jannaschii).